The sequence spans 475 residues: Ataxin-10 (475 aa).

Arg-10 bears the Omega-N-methylarginine mark. Ser-12 bears the Phosphoserine; by AURKB mark. Ser-77 bears the Phosphoserine; by PLK1 mark. Residue Thr-82 is modified to Phosphothreonine; by PLK1. Ser-430 is modified (phosphoserine).

It belongs to the ataxin-10 family. As to quaternary structure, homooligomer. Interacts with GNB2. Interacts with IQCB1. Interacts with OGT. Post-translationally, polyubiquitinated. In terms of processing, phosphorylation at Ser-12 by AURKB promotes the association of ATXN10 with PLK1. Phosphorylation at Ser-77 and Thr-82 by PLK1 may play a role in the regulation of cytokinesis and may stimulate the proteasome-mediated degradation of ATXN10. As to expression, expressed in the central nervous system.

Its subcellular location is the cytoplasm. It is found in the perinuclear region. The protein resides in the midbody. It localises to the cytoskeleton. The protein localises to the cilium basal body. Its subcellular location is the microtubule organizing center. It is found in the centrosome. The protein resides in the centriole. Its function is as follows. May play a role in the regulation of cytokinesis. May play a role in signaling by stimulating protein glycosylation. Induces neuritogenesis by activating the Ras-MAP kinase pathway and is necessary for the survival of cerebellar neurons. Does not appear to play a major role in ciliogenesis. This Homo sapiens (Human) protein is Ataxin-10 (ATXN10).